The chain runs to 288 residues: UDP-3-O-acyl-N-acetylglucosamine deacetylase (288 aa).

Residues His79, His236, and Asp240 each coordinate Zn(2+). Residue His263 is the Proton donor of the active site.

This sequence belongs to the LpxC family. Requires Zn(2+) as cofactor.

The catalysed reaction is a UDP-3-O-[(3R)-3-hydroxyacyl]-N-acetyl-alpha-D-glucosamine + H2O = a UDP-3-O-[(3R)-3-hydroxyacyl]-alpha-D-glucosamine + acetate. Its pathway is glycolipid biosynthesis; lipid IV(A) biosynthesis; lipid IV(A) from (3R)-3-hydroxytetradecanoyl-[acyl-carrier-protein] and UDP-N-acetyl-alpha-D-glucosamine: step 2/6. Functionally, catalyzes the hydrolysis of UDP-3-O-myristoyl-N-acetylglucosamine to form UDP-3-O-myristoylglucosamine and acetate, the committed step in lipid A biosynthesis. This Rickettsia bellii (strain OSU 85-389) protein is UDP-3-O-acyl-N-acetylglucosamine deacetylase.